The following is a 419-amino-acid chain: Mitochondrial chaperone BCS1 (419 aa).

Residues 1-15 (MPLSDFVLALKDNPY) are Mitochondrial intermembrane-facing. Residues 16-32 (FGAGFGLVGVGTALALA) form a helical membrane-spanning segment. The Mitochondrial matrix segment spans residues 33-419 (RKGAQLGLVA…AIQNAESLRR (387 aa)). Y181 carries the phosphotyrosine modification. 230–237 (GPPGCGKS) lines the ATP pocket.

It belongs to the AAA ATPase family. BCS1 subfamily. In terms of assembly, interacts with LETM1.

It is found in the mitochondrion inner membrane. It catalyses the reaction ATP + H2O = ADP + phosphate + H(+). Chaperone necessary for the incorporation of Rieske iron-sulfur protein UQCRFS1 into the mitochondrial respiratory chain complex III. Plays an important role in the maintenance of mitochondrial tubular networks, respiratory chain assembly and formation of the LETM1 complex. This Bos taurus (Bovine) protein is Mitochondrial chaperone BCS1 (BCS1L).